The sequence spans 384 residues: Mannitol-1-phosphate 5-dehydrogenase (384 aa).

3–14 contributes to the NAD(+) binding site; that stretch reads AVHFGAGNIGRG.

Belongs to the mannitol dehydrogenase family. As to quaternary structure, monomer.

It carries out the reaction D-mannitol 1-phosphate + NAD(+) = beta-D-fructose 6-phosphate + NADH + H(+). The protein is Mannitol-1-phosphate 5-dehydrogenase (mtlD) of Enterococcus faecalis (strain ATCC 700802 / V583).